We begin with the raw amino-acid sequence, 145 residues long: D-aminoacyl-tRNA deacylase (145 aa).

Residues 137 to 138 (GP) carry the Gly-cisPro motif, important for rejection of L-amino acids motif.

The protein belongs to the DTD family. Homodimer.

The protein localises to the cytoplasm. The catalysed reaction is glycyl-tRNA(Ala) + H2O = tRNA(Ala) + glycine + H(+). The enzyme catalyses a D-aminoacyl-tRNA + H2O = a tRNA + a D-alpha-amino acid + H(+). Functionally, an aminoacyl-tRNA editing enzyme that deacylates mischarged D-aminoacyl-tRNAs. Also deacylates mischarged glycyl-tRNA(Ala), protecting cells against glycine mischarging by AlaRS. Acts via tRNA-based rather than protein-based catalysis; rejects L-amino acids rather than detecting D-amino acids in the active site. By recycling D-aminoacyl-tRNA to D-amino acids and free tRNA molecules, this enzyme counteracts the toxicity associated with the formation of D-aminoacyl-tRNA entities in vivo and helps enforce protein L-homochirality. In Rhodopirellula baltica (strain DSM 10527 / NCIMB 13988 / SH1), this protein is D-aminoacyl-tRNA deacylase.